Reading from the N-terminus, the 51-residue chain is Large ribosomal subunit protein bL33 (51 aa).

It belongs to the bacterial ribosomal protein bL33 family.

The sequence is that of Large ribosomal subunit protein bL33 from Idiomarina loihiensis (strain ATCC BAA-735 / DSM 15497 / L2-TR).